The sequence spans 355 residues: Tryptophan--tRNA ligase (355 aa).

Residues 13–15 (QPT) and 21–22 (GN) each bind ATP. A 'HIGH' region motif is present at residues 14–22 (PTGNLHLGN). Aspartate 137 contacts L-tryptophan. ATP-binding positions include 149 to 151 (GED), isoleucine 208, and 217 to 221 (KMSKS). The 'KMSKS' region motif lies at 217–221 (KMSKS).

Belongs to the class-I aminoacyl-tRNA synthetase family. Homodimer.

It is found in the cytoplasm. It catalyses the reaction tRNA(Trp) + L-tryptophan + ATP = L-tryptophyl-tRNA(Trp) + AMP + diphosphate + H(+). Functionally, catalyzes the attachment of tryptophan to tRNA(Trp). The protein is Tryptophan--tRNA ligase of Brucella melitensis biotype 1 (strain ATCC 23456 / CCUG 17765 / NCTC 10094 / 16M).